A 297-amino-acid polypeptide reads, in one-letter code: Pyridoxal 5'-phosphate synthase subunit Pdx1 (297 aa).

D-ribose 5-phosphate is bound at residue Asp27. The active-site Schiff-base intermediate with D-ribose 5-phosphate is the Lys84. A D-ribose 5-phosphate-binding site is contributed by Gly156. Position 168 (Arg168) interacts with D-glyceraldehyde 3-phosphate. D-ribose 5-phosphate contacts are provided by residues Gly217 and 238–239; that span reads GS.

Belongs to the PdxS/SNZ family. As to quaternary structure, homohexamer and homododecamer. In the presence of Pdx2, forms a dodecamer of heterodimers.

The catalysed reaction is aldehydo-D-ribose 5-phosphate + D-glyceraldehyde 3-phosphate + L-glutamine = pyridoxal 5'-phosphate + L-glutamate + phosphate + 3 H2O + H(+). It functions in the pathway cofactor biosynthesis; pyridoxal 5'-phosphate biosynthesis. Its function is as follows. Catalyzes the formation of pyridoxal 5'-phosphate from ribose 5-phosphate (RBP), glyceraldehyde 3-phosphate (G3P) and ammonia. The ammonia is provided by Pdx2. Can also use ribulose 5-phosphate and dihydroxyacetone phosphate as substrates, resulting from enzyme-catalyzed isomerization of RBP and G3P, respectively. This is Pyridoxal 5'-phosphate synthase subunit Pdx1 from Plasmodium berghei.